Here is a 444-residue protein sequence, read N- to C-terminus: Tubulin beta-4 chain (444 aa).

Gln-11, Glu-69, Ser-138, Gly-142, Thr-143, Gly-144, Asn-204, and Asn-226 together coordinate GTP. Residue Glu-69 coordinates Mg(2+).

Belongs to the tubulin family. As to quaternary structure, dimer of alpha and beta chains. A typical microtubule is a hollow water-filled tube with an outer diameter of 25 nm and an inner diameter of 15 nM. Alpha-beta heterodimers associate head-to-tail to form protofilaments running lengthwise along the microtubule wall with the beta-tubulin subunit facing the microtubule plus end conferring a structural polarity. Microtubules usually have 13 protofilaments but different protofilament numbers can be found in some organisms and specialized cells. The cofactor is Mg(2+).

The protein localises to the cytoplasm. The protein resides in the cytoskeleton. Its function is as follows. Tubulin is the major constituent of microtubules, a cylinder consisting of laterally associated linear protofilaments composed of alpha- and beta-tubulin heterodimers. Microtubules grow by the addition of GTP-tubulin dimers to the microtubule end, where a stabilizing cap forms. Below the cap, tubulin dimers are in GDP-bound state, owing to GTPase activity of alpha-tubulin. This chain is Tubulin beta-4 chain (TUBB4), found in Arabidopsis thaliana (Mouse-ear cress).